Reading from the N-terminus, the 312-residue chain is Olfactory receptor 51B5 (312 aa).

Residues 1-23 (MSSSGSSHPFLLTGFPGLEEAHH) are Extracellular-facing. Residues 24–44 (WISVFFLFMYISILFGNGTLL) traverse the membrane as a helical segment. Over 45-52 (LLIKEDHN) the chain is Cytoplasmic. A helical membrane pass occupies residues 53-73 (LHEPMYFFLAMLAATDLGLAL). Topologically, residues 74–97 (TTMPTVLGVLWLDHREIGSAACFS) are extracellular. A disulfide bond links Cys-95 and Cys-187. Residues 98–118 (QAYFIHSLSFLESGILLAMAY) traverse the membrane as a helical segment. The Cytoplasmic segment spans residues 119–137 (DRFIAICNPLRYTSVLTNT). A helical transmembrane segment spans residues 138-158 (RVVKIGLGVLMRGFVSVVPPI). At 159-194 (RPLYFFLYCHSHVLSHAFCLHQDVIKLACADTTFNR) the chain is on the extracellular side. Residues 195–215 (LYPAVLVVFIFVLDYLIIFIS) form a helical membrane-spanning segment. Residues 216 to 235 (YVLILKTVLSIASREERAKA) lie on the Cytoplasmic side of the membrane. Residues 236–256 (LITCVSHICCVLVFYVTVIGL) traverse the membrane as a helical segment. The Extracellular portion of the chain corresponds to 257–271 (SLIHRFGKQVPHIVH). Residues 272–292 (LIMSYAYFLFPPLMNPITYSV) traverse the membrane as a helical segment. The Cytoplasmic portion of the chain corresponds to 293–312 (KTKQIQNAILHLFTTHRIGT).

It belongs to the G-protein coupled receptor 1 family.

The protein localises to the cell membrane. Odorant receptor. The polypeptide is Olfactory receptor 51B5 (OR51B5) (Homo sapiens (Human)).